The following is a 53-amino-acid chain: Large ribosomal subunit protein bL33 (53 aa).

This sequence belongs to the bacterial ribosomal protein bL33 family.

In Malacoplasma penetrans (strain HF-2) (Mycoplasma penetrans), this protein is Large ribosomal subunit protein bL33.